An 862-amino-acid chain; its full sequence is Linoleate 9S-lipoxygenase 1 (862 aa).

Residues N34–A161 enclose the PLAT domain. One can recognise a Lipoxygenase domain in the interval T164 to I862. Residues G212 to L241 are disordered. Fe cation contacts are provided by H517, H522, H708, N712, and I862.

Belongs to the lipoxygenase family. Monomer. Fe cation serves as cofactor.

The catalysed reaction is (9Z,12Z)-octadecadienoate + O2 = (9S)-hydroperoxy-(10E,12Z)-octadecadienoate. Its pathway is lipid metabolism; oxylipin biosynthesis. Plant lipoxygenase may be involved in a number of diverse aspects of plant physiology including growth and development, pest resistance, and senescence or responses to wounding. It catalyzes the hydroperoxidation of lipids containing a cis,cis-1,4-pentadiene structure. This chain is Linoleate 9S-lipoxygenase 1 (LOX1.1), found in Hordeum vulgare (Barley).